Consider the following 208-residue polypeptide: Cysteine-rich protein 2 (208 aa).

The 53-residue stretch at 5-57 folds into the LIM zinc-binding 1 domain; the sequence is CPKCDKTVYFAEKVSSLGKDWHKFCLKCERCNKTLTPGGHAEHDGKPFCHKPC. Residue K23 is modified to N6-acetyllysine. Residue S104 is modified to Phosphoserine. Residues 126–178 form the LIM zinc-binding 2 domain; it reads CPRCNKRVYFAEKVTSLGKDWHRPCLRCERCSKTLTPGGHAEHDGQPYCHKPC. 2 positions are modified to N6-acetyllysine: K138 and K144.

In terms of assembly, interacts with TGFB1I1.

The sequence is that of Cysteine-rich protein 2 (Crip2) from Mus musculus (Mouse).